The chain runs to 245 residues: MTFTASSSSCAITESPVVVALDYHERDKALAFVDKIDPRDCRLKVGKEMFTLFGPQLVRDLQQRGFDVFLDLKFHDIPNTTARAVAAAADLGVWMVNVHASGGARMMAAARDALAPFGKDAPLLIAVTVLTSMETSDLRDLGVTLSPAEHAERLVRLTQQCGLDGVVCSAQEAVRFKQVFGAAFKLVTPGIRPAGSEAGDQRRIMTPEQALSAGVDYMVIGRPVTQSVDPAQTLKDINASLKREA.

Substrate contacts are provided by residues Asp22, Lys44, Asp71–Thr80, Thr131, Arg192, Gln201, Gly221, and Arg222. Residue Lys73 is the Proton donor of the active site.

Belongs to the OMP decarboxylase family. Type 1 subfamily. As to quaternary structure, homodimer.

It carries out the reaction orotidine 5'-phosphate + H(+) = UMP + CO2. Its pathway is pyrimidine metabolism; UMP biosynthesis via de novo pathway; UMP from orotate: step 2/2. Catalyzes the decarboxylation of orotidine 5'-monophosphate (OMP) to uridine 5'-monophosphate (UMP). The chain is Orotidine 5'-phosphate decarboxylase from Salmonella choleraesuis (strain SC-B67).